Reading from the N-terminus, the 64-residue chain is U-scoloptoxin(14)-Er1a (64 aa).

The signal sequence occupies residues 1-23; sequence MRPSFPLLLIMLLVCTAHHMVSG.

This sequence belongs to the scoloptoxin-14 family. Contains 4 disulfide bonds. Expressed by the venom gland.

It is found in the secreted. This Ethmostigmus rubripes (Giant centipede) protein is U-scoloptoxin(14)-Er1a.